A 343-amino-acid chain; its full sequence is MIKLSNITKVFQQGTRTIQALNNVSLHVPAGQIYGVIGASGAGKSTLIRCVNLLERPTEGSVQVGGQELTTLSESELTKARRQIGMIFQHFNLLSSRTVFGNVALPLELDNTPKEEIKRRVTELLDLVGLGDKHDSYPANLSGGQKQRVAIARALASNPKVLLCDEATSALDPATTRSILELLKDINRRLGLTILLITHEMDVVKRICDCVAVISNGELIEQDTVSEVFSHPKTPLAQKFIQSTLHLDIPEDYQARLKASPETDSVPMLRMEFTGQSVDAPLLSETARRFNVNNNIISAQMDYAGGVKFGIMLTEMHGTQEETQAAIAWLQDHHVKVEVLGYV.

In terms of domain architecture, ABC transporter spans 2–241 (IKLSNITKVF…PKTPLAQKFI (240 aa)). 38–45 (GASGAGKS) contacts ATP.

Belongs to the ABC transporter superfamily. Methionine importer (TC 3.A.1.24) family. The complex is composed of two ATP-binding proteins (MetN), two transmembrane proteins (MetI) and a solute-binding protein (MetQ).

Its subcellular location is the cell inner membrane. The catalysed reaction is L-methionine(out) + ATP + H2O = L-methionine(in) + ADP + phosphate + H(+). The enzyme catalyses D-methionine(out) + ATP + H2O = D-methionine(in) + ADP + phosphate + H(+). Functionally, part of the ABC transporter complex MetNIQ involved in methionine import. Responsible for energy coupling to the transport system. In Salmonella typhimurium (strain LT2 / SGSC1412 / ATCC 700720), this protein is Methionine import ATP-binding protein MetN 1.